A 170-amino-acid polypeptide reads, in one-letter code: Capsid protein (170 aa).

Over residues Met-1–Ser-19 the composition is skewed to basic residues. Residues Met-1–Lys-25 are disordered.

This sequence belongs to the nanoviridae capsid protein family.

The protein localises to the virion. The polypeptide is Capsid protein (DNA-S) (Subterranean clover stunt virus (strain J) (SCSV)).